The following is a 210-amino-acid chain: Calaxin (210 aa).

EF-hand domains lie at 64–99 (TDDMMTDRVCRVIDKDNDGYLSVKEWVEALSVFLRG), 100–135 (TLDEKMKYCFEVYDLNGDGYISREEMFQMLKDSLIR), and 145–180 (GIKDIVEIALKKMDYDHDGRVSYADFEKTVMDENLL). Ca(2+) is bound by residues Asp-77, Asp-79, Asp-81, Tyr-83, Glu-88, Asp-113, Asn-115, Asp-117, Tyr-119, Glu-124, Asp-158, Asp-160, Asp-162, Arg-164, and Asp-169.

Component of the outer dynein arm-docking complex along with ODAD1, ODAD2, ODAD3 and ODAD4.

Its subcellular location is the cytoplasm. The protein resides in the cytoskeleton. It is found in the cilium axoneme. It localises to the cell projection. The protein localises to the cilium. Its subcellular location is the flagellum. Functionally, component of the outer dynein arm-docking complex (ODA-DC) that mediates outer dynein arms (ODA) binding onto the doublet microtubule. Seems to regulate the assembly of both ODAs and their axonemal docking complex onto ciliary microtubules. Regulates ciliary and flagellar motility and is required for cilia-driven determination of body laterality. Its function is as follows. Regulates ciliary motility and is required for cilia-driven determination of body laterality. The chain is Calaxin (clxn) from Danio rerio (Zebrafish).